The following is a 427-amino-acid chain: Gamma-glutamyl phosphate reductase (427 aa).

It belongs to the gamma-glutamyl phosphate reductase family.

It localises to the cytoplasm. It catalyses the reaction L-glutamate 5-semialdehyde + phosphate + NADP(+) = L-glutamyl 5-phosphate + NADPH + H(+). Its pathway is amino-acid biosynthesis; L-proline biosynthesis; L-glutamate 5-semialdehyde from L-glutamate: step 2/2. Catalyzes the NADPH-dependent reduction of L-glutamate 5-phosphate into L-glutamate 5-semialdehyde and phosphate. The product spontaneously undergoes cyclization to form 1-pyrroline-5-carboxylate. The polypeptide is Gamma-glutamyl phosphate reductase (Rhodospirillum rubrum (strain ATCC 11170 / ATH 1.1.1 / DSM 467 / LMG 4362 / NCIMB 8255 / S1)).